Reading from the N-terminus, the 282-residue chain is Pseudokinase OPG198 (282 aa).

ATP is bound by residues M1 and K30. Residues M1–D282 form the Protein kinase domain.

It belongs to the protein kinase superfamily. Ser/Thr protein kinase family. Poxviruses subfamily. As to quaternary structure, interacts with B1/VPK1. Interacts with host VRK1. Interacts with host VRK2.

The protein resides in the host nucleus. Both catalytically active kinases B1/VPK1 and host VRK2 repress B12 inhibitory activity in a B1/VPK1 deletion mutant strain. In terms of biological role, pseudokinase that plays a role in viral DNA replication repression by activating the antiviral protein BANF1 and inhibiting the activity of host VRK1, a cellular modulator of BANF1. This Cynomys gunnisoni (Gunnison's prairie dog) protein is Pseudokinase OPG198 (OPG198).